A 130-amino-acid polypeptide reads, in one-letter code: uncharacterized protein (130 aa).

Residues 76 to 102 (RKCKNGPSPNKRGSASGCSRRGGGRGS) form a disordered region.

This is an uncharacterized protein from Saccharomyces cerevisiae (strain ATCC 204508 / S288c) (Baker's yeast).